The chain runs to 401 residues: Phosphoglycerate kinase (401 aa).

Residues 23–25, Arg39, 62–65, Arg121, and Arg154 each bind substrate; these read DFN and HLGR. Residues Lys207, Gly298, Glu329, and 355 to 358 contribute to the ATP site; that span reads GGDT.

It belongs to the phosphoglycerate kinase family. As to quaternary structure, monomer.

The protein resides in the cytoplasm. It carries out the reaction (2R)-3-phosphoglycerate + ATP = (2R)-3-phospho-glyceroyl phosphate + ADP. It functions in the pathway carbohydrate degradation; glycolysis; pyruvate from D-glyceraldehyde 3-phosphate: step 2/5. In Campylobacter fetus subsp. fetus (strain 82-40), this protein is Phosphoglycerate kinase.